A 308-amino-acid chain; its full sequence is MSKAPRHFLDLLDMSTGELRAILDASVAMKKRRKEGLIADKPLAGKTLAMIFDKPSTRTRVSFDVGMRQLGGEAIMLTGAEMQLGRGETIADTAKVLSRFVDIIMIRILSHDALTELAAHATVPVINGLTRRSHPCQVMADVMTFEEHRGPIEGRTVAWTGDDNNVLASWAHAAERFSFNLNVATPQELAPNKPLKDWIRSSGASIRLGTDPEAAVRGADCIVTDTWVSMGDKDGEHRHNLLRPYQVNAELMRLAKSDALFMHCLPAHRGEEVTDEVIDGPQSVVFDEAENRLHAQKGILAWCLGAGG.

Residues 56 to 59 (STRT), Gln-83, Arg-107, and 134 to 137 (HPCQ) contribute to the carbamoyl phosphate site. L-ornithine is bound by residues Asn-165, Asp-225, and 229 to 230 (SM). Residues 264 to 265 (CL) and Arg-292 contribute to the carbamoyl phosphate site.

The protein belongs to the aspartate/ornithine carbamoyltransferase superfamily. OTCase family.

It is found in the cytoplasm. It carries out the reaction carbamoyl phosphate + L-ornithine = L-citrulline + phosphate + H(+). It functions in the pathway amino-acid biosynthesis; L-arginine biosynthesis; L-arginine from L-ornithine and carbamoyl phosphate: step 1/3. Reversibly catalyzes the transfer of the carbamoyl group from carbamoyl phosphate (CP) to the N(epsilon) atom of ornithine (ORN) to produce L-citrulline. The protein is Ornithine carbamoyltransferase of Nitrobacter winogradskyi (strain ATCC 25391 / DSM 10237 / CIP 104748 / NCIMB 11846 / Nb-255).